We begin with the raw amino-acid sequence, 247 residues long: Phosphoglycerate mutase 1 (247 aa).

Residues 8-15 (RHGQSEWN) and 21-22 (TG) contribute to the substrate site. Histidine 9 functions as the Tele-phosphohistidine intermediate in the catalytic mechanism. Position 12 is a phosphoserine (serine 12). Lysine 31 participates in a covalent cross-link: Glycyl lysine isopeptide (Lys-Gly) (interchain with G-Cter in ubiquitin). Tyrosine 49 is modified (phosphotyrosine). Residue lysine 57 forms a Glycyl lysine isopeptide (Lys-Gly) (interchain with G-Cter in ubiquitin) linkage. Substrate is bound at residue arginine 60. Lysine 71 is covalently cross-linked (Glycyl lysine isopeptide (Lys-Gly) (interchain with G-Cter in ubiquitin)). Glutamate 87 acts as the Proton donor/acceptor in catalysis. Residues 87–90 (ERHY), lysine 98, and 114–115 (RR) contribute to the substrate site. Residues serine 116, serine 127, and serine 128 each carry the phosphoserine modification. Glycyl lysine isopeptide (Lys-Gly) (interchain with G-Cter in ubiquitin) cross-links involve residues lysine 139 and lysine 175. Residue 183 to 184 (GN) participates in substrate binding. The residue at position 185 (serine 185) is a Phosphoserine. Lysine 191 participates in a covalent cross-link: Glycyl lysine isopeptide (Lys-Gly) (interchain with G-Cter in ubiquitin). Phosphoserine is present on serine 197.

This sequence belongs to the phosphoglycerate mutase family. BPG-dependent PGAM subfamily. Homotetramer: dimer of dimers.

Its subcellular location is the cytoplasm. The protein localises to the mitochondrion outer membrane. It localises to the mitochondrion intermembrane space. It catalyses the reaction (2R)-2-phosphoglycerate = (2R)-3-phosphoglycerate. The protein operates within carbohydrate degradation; glycolysis; pyruvate from D-glyceraldehyde 3-phosphate: step 3/5. Inhibited by inositol hexakisphosphate and benzene tri-, tetra- and hexacarboxylates. Its function is as follows. Interconversion of 3- and 2-phosphoglycerate with 2,3-bisphosphoglycerate as the primer of the reaction. Can also catalyze the reaction of EC 5.4.2.4 (synthase), but with a reduced activity. The polypeptide is Phosphoglycerate mutase 1 (GPM1) (Saccharomyces cerevisiae (strain ATCC 204508 / S288c) (Baker's yeast)).